A 188-amino-acid polypeptide reads, in one-letter code: GMP synthase [glutamine-hydrolyzing] subunit A (188 aa).

Positions 1–188 constitute a Glutamine amidotransferase type-1 domain; sequence MIVIMDNGGQ…RNFAKLCGEL (188 aa). Cys-78 (nucleophile) is an active-site residue. Catalysis depends on residues His-165 and Glu-167.

As to quaternary structure, heterodimer composed of a glutamine amidotransferase subunit (A) and a GMP-binding subunit (B).

It carries out the reaction XMP + L-glutamine + ATP + H2O = GMP + L-glutamate + AMP + diphosphate + 2 H(+). The protein operates within purine metabolism; GMP biosynthesis; GMP from XMP (L-Gln route): step 1/1. In terms of biological role, catalyzes the synthesis of GMP from XMP. The chain is GMP synthase [glutamine-hydrolyzing] subunit A from Pyrococcus abyssi (strain GE5 / Orsay).